The sequence spans 382 residues: Queuine tRNA-ribosyltransferase (382 aa).

Asp93 functions as the Proton acceptor in the catalytic mechanism. Residues 93-97 (DSGGF), Asp147, Gln191, and Gly218 contribute to the substrate site. The RNA binding stretch occupies residues 249–255 (GVGKPED). Asp268 (nucleophile) is an active-site residue. Residues 273–277 (TRNAR) are RNA binding; important for wobble base 34 recognition. 4 residues coordinate Zn(2+): Cys306, Cys308, Cys311, and His337.

The protein belongs to the queuine tRNA-ribosyltransferase family. In terms of assembly, homodimer. Within each dimer, one monomer is responsible for RNA recognition and catalysis, while the other monomer binds to the replacement base PreQ1. Zn(2+) is required as a cofactor.

It catalyses the reaction 7-aminomethyl-7-carbaguanine + guanosine(34) in tRNA = 7-aminomethyl-7-carbaguanosine(34) in tRNA + guanine. Its pathway is tRNA modification; tRNA-queuosine biosynthesis. In terms of biological role, catalyzes the base-exchange of a guanine (G) residue with the queuine precursor 7-aminomethyl-7-deazaguanine (PreQ1) at position 34 (anticodon wobble position) in tRNAs with GU(N) anticodons (tRNA-Asp, -Asn, -His and -Tyr). Catalysis occurs through a double-displacement mechanism. The nucleophile active site attacks the C1' of nucleotide 34 to detach the guanine base from the RNA, forming a covalent enzyme-RNA intermediate. The proton acceptor active site deprotonates the incoming PreQ1, allowing a nucleophilic attack on the C1' of the ribose to form the product. After dissociation, two additional enzymatic reactions on the tRNA convert PreQ1 to queuine (Q), resulting in the hypermodified nucleoside queuosine (7-(((4,5-cis-dihydroxy-2-cyclopenten-1-yl)amino)methyl)-7-deazaguanosine). This Haemophilus influenzae (strain 86-028NP) protein is Queuine tRNA-ribosyltransferase.